We begin with the raw amino-acid sequence, 150 residues long: UPF0098 protein CT_736 (150 aa).

It belongs to the UPF0098 family.

This is UPF0098 protein CT_736 from Chlamydia trachomatis serovar D (strain ATCC VR-885 / DSM 19411 / UW-3/Cx).